We begin with the raw amino-acid sequence, 398 residues long: 1-deoxy-D-xylulose 5-phosphate reductoisomerase (398 aa).

Positions 10, 11, 12, 13, 38, and 124 each coordinate NADPH. A 1-deoxy-D-xylulose 5-phosphate-binding site is contributed by K125. Position 126 (E126) interacts with NADPH. D150 contributes to the Mn(2+) binding site. S151, E152, S176, and H199 together coordinate 1-deoxy-D-xylulose 5-phosphate. E152 provides a ligand contact to Mn(2+). G205 contributes to the NADPH binding site. 1-deoxy-D-xylulose 5-phosphate contacts are provided by S212, N217, K218, and E221. E221 is a binding site for Mn(2+).

This sequence belongs to the DXR family. The cofactor is Mg(2+). Mn(2+) is required as a cofactor.

It carries out the reaction 2-C-methyl-D-erythritol 4-phosphate + NADP(+) = 1-deoxy-D-xylulose 5-phosphate + NADPH + H(+). Its pathway is isoprenoid biosynthesis; isopentenyl diphosphate biosynthesis via DXP pathway; isopentenyl diphosphate from 1-deoxy-D-xylulose 5-phosphate: step 1/6. In terms of biological role, catalyzes the NADPH-dependent rearrangement and reduction of 1-deoxy-D-xylulose-5-phosphate (DXP) to 2-C-methyl-D-erythritol 4-phosphate (MEP). This is 1-deoxy-D-xylulose 5-phosphate reductoisomerase from Rippkaea orientalis (strain PCC 8801 / RF-1) (Cyanothece sp. (strain PCC 8801)).